The following is a 201-amino-acid chain: 3-isopropylmalate dehydratase small subunit (201 aa).

This sequence belongs to the LeuD family. LeuD type 1 subfamily. As to quaternary structure, heterodimer of LeuC and LeuD.

The catalysed reaction is (2R,3S)-3-isopropylmalate = (2S)-2-isopropylmalate. The protein operates within amino-acid biosynthesis; L-leucine biosynthesis; L-leucine from 3-methyl-2-oxobutanoate: step 2/4. Its function is as follows. Catalyzes the isomerization between 2-isopropylmalate and 3-isopropylmalate, via the formation of 2-isopropylmaleate. This chain is 3-isopropylmalate dehydratase small subunit, found in Methylorubrum populi (strain ATCC BAA-705 / NCIMB 13946 / BJ001) (Methylobacterium populi).